Reading from the N-terminus, the 113-residue chain is Probable 4-amino-4-deoxy-L-arabinose-phosphoundecaprenol flippase subunit ArnE (113 aa).

3 consecutive transmembrane segments (helical) span residues 39-59, 62-82, and 91-111; these read IFWLITAIAMLGFGMLFWLRL, ILPLSIAYPMLSINFIVVTLI, and VNVKHWVGIASIMLGIVLMSM. In terms of domain architecture, EamA spans 42–111; the sequence is LITAIAMLGF…IMLGIVLMSM (70 aa).

The protein belongs to the ArnE family. Heterodimer of ArnE and ArnF.

Its subcellular location is the cell inner membrane. It participates in bacterial outer membrane biogenesis; lipopolysaccharide biosynthesis. Its function is as follows. Translocates 4-amino-4-deoxy-L-arabinose-phosphoundecaprenol (alpha-L-Ara4N-phosphoundecaprenol) from the cytoplasmic to the periplasmic side of the inner membrane. The chain is Probable 4-amino-4-deoxy-L-arabinose-phosphoundecaprenol flippase subunit ArnE from Proteus mirabilis (strain HI4320).